A 313-amino-acid polypeptide reads, in one-letter code: Aspartate carbamoyltransferase catalytic subunit (313 aa).

2 residues coordinate carbamoyl phosphate: arginine 54 and threonine 55. Residue lysine 82 participates in L-aspartate binding. Positions 104, 132, and 135 each coordinate carbamoyl phosphate. L-aspartate contacts are provided by arginine 165 and arginine 219. Carbamoyl phosphate is bound by residues glycine 260 and proline 261.

It belongs to the aspartate/ornithine carbamoyltransferase superfamily. ATCase family. In terms of assembly, heterododecamer (2C3:3R2) of six catalytic PyrB chains organized as two trimers (C3), and six regulatory PyrI chains organized as three dimers (R2).

The enzyme catalyses carbamoyl phosphate + L-aspartate = N-carbamoyl-L-aspartate + phosphate + H(+). Its pathway is pyrimidine metabolism; UMP biosynthesis via de novo pathway; (S)-dihydroorotate from bicarbonate: step 2/3. In terms of biological role, catalyzes the condensation of carbamoyl phosphate and aspartate to form carbamoyl aspartate and inorganic phosphate, the committed step in the de novo pyrimidine nucleotide biosynthesis pathway. The protein is Aspartate carbamoyltransferase catalytic subunit of Thermobifida fusca (strain YX).